A 228-amino-acid polypeptide reads, in one-letter code: Urease accessory protein UreF (228 aa).

The protein belongs to the UreF family. As to quaternary structure, ureD, UreF and UreG form a complex that acts as a GTP-hydrolysis-dependent molecular chaperone, activating the urease apoprotein by helping to assemble the nickel containing metallocenter of UreC. The UreE protein probably delivers the nickel.

It is found in the cytoplasm. Required for maturation of urease via the functional incorporation of the urease nickel metallocenter. This chain is Urease accessory protein UreF, found in Prochlorococcus marinus (strain MIT 9301).